The chain runs to 462 residues: Beta-glucosidase 1A (462 aa).

The substrate site is built by Q20, H123, and N169. E170 acts as the Proton donor in catalysis. Substrate is bound at residue Y301. The active-site Nucleophile is E365. Substrate-binding positions include W415 and 422–423 (EW).

Belongs to the glycosyl hydrolase 1 family.

It catalyses the reaction Hydrolysis of terminal, non-reducing beta-D-glucosyl residues with release of beta-D-glucose.. Plays an important role in cellulose degradation. Shows hydrolytic activity against several glycosidic compounds. The polypeptide is Beta-glucosidase 1A (Phanerodontia chrysosporium (White-rot fungus)).